The chain runs to 356 residues: Cytochrome c oxidase subunit 2 (356 aa).

Positions methionine 1–glycine 23 are cleaved as a signal peptide. Residues cysteine 24–aspartate 259 form a cytochrome c oxidase subunit II region. The next 2 membrane-spanning stretches (helical) occupy residues leucine 45–valine 65 and isoleucine 93–threonine 113. Cu cation contacts are provided by histidine 178, cysteine 219, cysteine 223, and histidine 227. The Cytochrome c domain occupies proline 260 to glutamate 356. Residues cysteine 273, cysteine 276, histidine 277, and methionine 331 each coordinate heme c.

This sequence belongs to the cytochrome c oxidase subunit 2 family. It depends on Cu cation as a cofactor. The cofactor is heme c.

The protein resides in the cell membrane. The catalysed reaction is 4 Fe(II)-[cytochrome c] + O2 + 8 H(+)(in) = 4 Fe(III)-[cytochrome c] + 2 H2O + 4 H(+)(out). Subunits I and II form the functional core of the enzyme complex. Electrons originating in cytochrome c are transferred via heme a and Cu(A) to the binuclear center formed by heme a3 and Cu(B). The chain is Cytochrome c oxidase subunit 2 (ctaC) from Bacillus sp. (strain PS3).